The chain runs to 363 residues: 3-dehydroquinate synthase (363 aa).

NAD(+) is bound by residues 72–77, 106–110, 130–131, Lys142, and Lys151; these read SGEQSK, GVIGD, and TT. Zn(2+)-binding residues include Glu184, His246, and His263.

The protein belongs to the sugar phosphate cyclases superfamily. Dehydroquinate synthase family. The cofactor is Co(2+). Requires Zn(2+) as cofactor. It depends on NAD(+) as a cofactor.

It is found in the cytoplasm. It catalyses the reaction 7-phospho-2-dehydro-3-deoxy-D-arabino-heptonate = 3-dehydroquinate + phosphate. It functions in the pathway metabolic intermediate biosynthesis; chorismate biosynthesis; chorismate from D-erythrose 4-phosphate and phosphoenolpyruvate: step 2/7. Its function is as follows. Catalyzes the conversion of 3-deoxy-D-arabino-heptulosonate 7-phosphate (DAHP) to dehydroquinate (DHQ). In Bacillus pumilus (strain SAFR-032), this protein is 3-dehydroquinate synthase.